Here is a 229-residue protein sequence, read N- to C-terminus: UPF0758 protein Cagg_0777 (229 aa).

The 123-residue stretch at 105–227 (PIRSPGDVAA…YVSLRERGIG (123 aa)) folds into the MPN domain. Residues H176, H178, and D189 each contribute to the Zn(2+) site. Positions 176–189 (HNHPSGEATPSPED) match the JAMM motif motif.

It belongs to the UPF0758 family.

The protein is UPF0758 protein Cagg_0777 of Chloroflexus aggregans (strain MD-66 / DSM 9485).